Reading from the N-terminus, the 1171-residue chain is ATP-dependent helicase/deoxyribonuclease subunit B (1171 aa).

The region spanning 1-390 (MSLRFVIGRA…HPLVECIRSA (390 aa)) is the UvrD-like helicase ATP-binding domain. Residue 8-15 (GRAGSGKS) participates in ATP binding. In terms of domain architecture, UvrD-like helicase C-terminal spans 281 to 587 (MEQPRFHSPA…QFANIPPSLD (307 aa)). [4Fe-4S] cluster is bound by residues C805, C1129, C1132, and C1138.

Belongs to the helicase family. AddB/RexB type 1 subfamily. Heterodimer of AddA and AddB. The cofactor is Mg(2+). [4Fe-4S] cluster serves as cofactor.

The heterodimer acts as both an ATP-dependent DNA helicase and an ATP-dependent, dual-direction single-stranded exonuclease. Recognizes the chi site generating a DNA molecule suitable for the initiation of homologous recombination. The AddB subunit has 5' -&gt; 3' nuclease activity but not helicase activity. In Bacillus cereus (strain ATCC 14579 / DSM 31 / CCUG 7414 / JCM 2152 / NBRC 15305 / NCIMB 9373 / NCTC 2599 / NRRL B-3711), this protein is ATP-dependent helicase/deoxyribonuclease subunit B.